Here is a 396-residue protein sequence, read N- to C-terminus: Na(+)/H(+) antiporter NhaA 2 (396 aa).

Helical transmembrane passes span 17-37 (LSGL…NSDF), 62-82 (LLHW…GLEI), 98-118 (SFPI…YISL), 125-145 (GFGV…MLLG), 154-174 (LFLV…VAIF), 179-199 (LHFE…FLNY), 209-229 (IILG…STIA), 268-288 (FSAF…IIDF), 296-316 (LIVL…IFSF), 337-357 (IFAV…ISHL), and 368-388 (VKLG…VLLI).

This sequence belongs to the NhaA Na(+)/H(+) (TC 2.A.33) antiporter family.

It localises to the cell inner membrane. The catalysed reaction is Na(+)(in) + 2 H(+)(out) = Na(+)(out) + 2 H(+)(in). In terms of biological role, na(+)/H(+) antiporter that extrudes sodium in exchange for external protons. This Aliarcobacter butzleri (strain RM4018) (Arcobacter butzleri) protein is Na(+)/H(+) antiporter NhaA 2.